Reading from the N-terminus, the 320-residue chain is Malate dehydrogenase (320 aa).

NAD(+) is bound by residues 10-15 and Asp-34; that span reads GAGQIG. Residues Arg-83 and Arg-89 each contribute to the substrate site. NAD(+)-binding positions include Asn-96 and 119-121; that span reads ITN. Substrate is bound by residues Asn-121 and Arg-152. His-176 functions as the Proton acceptor in the catalytic mechanism.

Belongs to the LDH/MDH superfamily. MDH type 3 family.

It catalyses the reaction (S)-malate + NAD(+) = oxaloacetate + NADH + H(+). Its function is as follows. Catalyzes the reversible oxidation of malate to oxaloacetate. The protein is Malate dehydrogenase of Jannaschia sp. (strain CCS1).